A 486-amino-acid chain; its full sequence is Membrane-bound lytic murein transglycosylase F (486 aa).

Residues 1–21 (MTRIKLSYFTIGLVALLLALA) form the signal peptide. The segment at 22 to 268 (LWPNIPWRNG…RLEEKYLGHV (247 aa)) is non-LT domain. Positions 269-486 (GSFDYVDTKT…VVGPGWSIGD (218 aa)) are LT domain. The active site involves glutamate 313.

It in the N-terminal section; belongs to the bacterial solute-binding protein 3 family. The protein in the C-terminal section; belongs to the transglycosylase Slt family.

Its subcellular location is the cell outer membrane. It catalyses the reaction Exolytic cleavage of the (1-&gt;4)-beta-glycosidic linkage between N-acetylmuramic acid (MurNAc) and N-acetylglucosamine (GlcNAc) residues in peptidoglycan, from either the reducing or the non-reducing ends of the peptidoglycan chains, with concomitant formation of a 1,6-anhydrobond in the MurNAc residue.. Murein-degrading enzyme that degrades murein glycan strands and insoluble, high-molecular weight murein sacculi, with the concomitant formation of a 1,6-anhydromuramoyl product. Lytic transglycosylases (LTs) play an integral role in the metabolism of the peptidoglycan (PG) sacculus. Their lytic action creates space within the PG sacculus to allow for its expansion as well as for the insertion of various structures such as secretion systems and flagella. In Yersinia pestis bv. Antiqua (strain Antiqua), this protein is Membrane-bound lytic murein transglycosylase F.